The primary structure comprises 87 residues: Small ribosomal subunit protein bS20 (87 aa).

The disordered stretch occupies residues 1–27; the sequence is MANSVQATKRARQAEKHRQHNAGMRAA. The segment covering 9–20 has biased composition (basic residues); sequence KRARQAEKHRQH.

This sequence belongs to the bacterial ribosomal protein bS20 family.

Functionally, binds directly to 16S ribosomal RNA. This is Small ribosomal subunit protein bS20 from Hydrogenovibrio crunogenus (strain DSM 25203 / XCL-2) (Thiomicrospira crunogena).